Consider the following 566-residue polypeptide: MDIKRIILYVIVALLAIALFNAWQRDYPPTPKPTPTVEQPTANGDHPTAYTPPAFTPGAAEKTKKAGTIALTSKVPEARLITVRTDVLDVEIDTQGGNIVSAKLPKYPVSLEEKQTPVQILSGEPNELYVAQSGLTNGNGQPTTVQFESAKKQYVLENGQNQLIVQLTGRAPDGLLVTKTYTFHRDDYAIHLAYQVKNNTSKPWQGSLYTQITRRQPPTEHHHFYVRSYNGASMGSPQTPYEKLSYESLDKQNIDRTSQSGWIAMQQHYFLSAWVPGNPELTYHYYSHVIPASGEPNVYVVGFVSPQMNVAAGSEAATHATLYVGPEIAKRLKGLAPGLERTIDYGWLWPISMLLFWILSAVHAVVKNWGWSIIITTILIKIVFYWFSAKSFRSMARMREMQPRIQALKERHGDDRQALSRATMELYRKEKINPLGGCLPMLIQVPVFIAFYYVIIESVQLRQAPFIFWIHDLSVKDPYYILPIIMGLSMLAQQWLSPTSPDPTQQKMMWILPVIFTVFFINFPAGLVLYWITNNVVQTLQQWYVNKTYESHKAKLKARRARKRKR.

The next 5 membrane-spanning stretches (helical) occupy residues 3–23, 346–366, 369–389, 436–456, and 509–529; these read IKRI…FNAW, GWLW…HAVV, WGWS…WFSA, GGCL…YVII, and MWIL…GLVL.

Belongs to the OXA1/ALB3/YidC family. Type 1 subfamily. As to quaternary structure, interacts with the Sec translocase complex via SecD. Specifically interacts with transmembrane segments of nascent integral membrane proteins during membrane integration.

The protein localises to the cell inner membrane. Its function is as follows. Required for the insertion and/or proper folding and/or complex formation of integral membrane proteins into the membrane. Involved in integration of membrane proteins that insert both dependently and independently of the Sec translocase complex, as well as at least some lipoproteins. Aids folding of multispanning membrane proteins. The sequence is that of Membrane protein insertase YidC from Coxiella burnetii (strain CbuK_Q154) (Coxiella burnetii (strain Q154)).